The sequence spans 67 residues: Large ribosomal subunit protein uL29 (67 aa).

It belongs to the universal ribosomal protein uL29 family.

In Methanosarcina mazei (strain ATCC BAA-159 / DSM 3647 / Goe1 / Go1 / JCM 11833 / OCM 88) (Methanosarcina frisia), this protein is Large ribosomal subunit protein uL29.